A 591-amino-acid polypeptide reads, in one-letter code: L-fucose isomerase (591 aa).

Residues E337 and D361 each act as proton acceptor in the active site. Mn(2+) contacts are provided by E337, D361, and H528.

It belongs to the L-fucose isomerase family. In terms of assembly, homohexamer. Requires Mn(2+) as cofactor.

Its subcellular location is the cytoplasm. It catalyses the reaction L-fucose = L-fuculose. Its pathway is carbohydrate degradation; L-fucose degradation; L-lactaldehyde and glycerone phosphate from L-fucose: step 1/3. Its function is as follows. Converts the aldose L-fucose into the corresponding ketose L-fuculose. In Escherichia coli O139:H28 (strain E24377A / ETEC), this protein is L-fucose isomerase.